The primary structure comprises 467 residues: MTLKPIHVIGGGMAGSEAAWQIASAGVPVILHEMRGVRGTDAHQTDKLAELVCSNSFRSDDHTTNAVGVIHEEMRRANGLIITTAKDHQVPAGSALAVDREGFSEAITAKLEAHPLVTIVREEIAGLPPEDWDSVIVATGPLTSIALAEAVRAHTGETDLAFFDAIAPIVYFESIDMDKAWRQSRYDKAGPSGDTAAYINCPMTEEQYNAFLDALLAAPKTEFRDWEKDTPYFEGCLPIEVMAERGRETLRFGPMKPVGLTNPHNPTVKAHAIVQLRQDNALGTLWNMVGFQTKLKYAAQTDIFRMIPGLEKAEFARLGGIHRNTFLNSPKLLDRQLRMKSMPRLRFAGQVTGVEGYVESAAMGLLAGRFAAAERLGQRLEPPPPTTAMGALISHITGGHLAEKQTFQPMNVNFGLFPDITDYSKTDENGKRLRGKDKGRAKKIAQAIRALQDFDAWLAGEAVVAAE.

Residue 10-15 (GGGMAG) participates in FAD binding.

This sequence belongs to the MnmG family. TrmFO subfamily. Requires FAD as cofactor.

Its subcellular location is the cytoplasm. The catalysed reaction is uridine(54) in tRNA + (6R)-5,10-methylene-5,6,7,8-tetrahydrofolate + NADH + H(+) = 5-methyluridine(54) in tRNA + (6S)-5,6,7,8-tetrahydrofolate + NAD(+). It catalyses the reaction uridine(54) in tRNA + (6R)-5,10-methylene-5,6,7,8-tetrahydrofolate + NADPH + H(+) = 5-methyluridine(54) in tRNA + (6S)-5,6,7,8-tetrahydrofolate + NADP(+). Catalyzes the folate-dependent formation of 5-methyl-uridine at position 54 (M-5-U54) in all tRNAs. This is Methylenetetrahydrofolate--tRNA-(uracil-5-)-methyltransferase TrmFO from Hyphomonas neptunium (strain ATCC 15444).